Here is a 132-residue protein sequence, read N- to C-terminus: Small ribosomal subunit protein uS8 (132 aa).

It belongs to the universal ribosomal protein uS8 family. In terms of assembly, part of the 30S ribosomal subunit. Contacts proteins S5 and S12.

Functionally, one of the primary rRNA binding proteins, it binds directly to 16S rRNA central domain where it helps coordinate assembly of the platform of the 30S subunit. The chain is Small ribosomal subunit protein uS8 from Mycobacterium sp. (strain KMS).